We begin with the raw amino-acid sequence, 90 residues long: Small ribosomal subunit protein uS15c (90 aa).

The protein belongs to the universal ribosomal protein uS15 family. As to quaternary structure, part of the 30S ribosomal subunit.

Its subcellular location is the plastid. It localises to the chloroplast. This is Small ribosomal subunit protein uS15c (rps15-A) from Pelargonium hortorum (Common geranium).